The chain runs to 739 residues: Polyribonucleotide nucleotidyltransferase (739 aa).

Mg(2+)-binding residues include aspartate 487 and aspartate 493. The 60-residue stretch at 554 to 613 folds into the KH domain; that stretch reads PRIETMQIPTDKIRDVIGTGGKVIREIVEKTGAKINIEDTGVVKIASADGKAIKAAYNWI. One can recognise an S1 motif domain in the interval 623 to 691; that stretch reads GVIYDGTIVK…DRGKIRLSMK (69 aa). The tract at residues 694-739 is disordered; that stretch reads DQQTGEDITDKIKAQRDAERAERGDEPREPREGGRHRGERRREAGE. Basic and acidic residues predominate over residues 701-739; sequence ITDKIKAQRDAERAERGDEPREPREGGRHRGERRREAGE.

The protein belongs to the polyribonucleotide nucleotidyltransferase family. It depends on Mg(2+) as a cofactor.

Its subcellular location is the cytoplasm. It carries out the reaction RNA(n+1) + phosphate = RNA(n) + a ribonucleoside 5'-diphosphate. In terms of biological role, involved in mRNA degradation. Catalyzes the phosphorolysis of single-stranded polyribonucleotides processively in the 3'- to 5'-direction. This chain is Polyribonucleotide nucleotidyltransferase, found in Methylobacterium radiotolerans (strain ATCC 27329 / DSM 1819 / JCM 2831 / NBRC 15690 / NCIMB 10815 / 0-1).